The following is a 571-amino-acid chain: FAD-linked oxidoreductase patO (571 aa).

An N-terminal signal peptide occupies residues 1–23 (MRLHQSPPRLLVCILSVLQVSAG). N-linked (GlcNAc...) asparagine glycosylation is found at Asn47, Asn101, Asn125, Asn179, Asn341, Asn374, Asn380, Asn421, Asn445, and Asn480. The FAD-binding PCMH-type domain maps to 115–294 (TLGAMVRYAV…YAVTVKTFPD (180 aa)).

Belongs to the oxygen-dependent FAD-linked oxidoreductase family. FAD is required as a cofactor.

Its subcellular location is the vacuole lumen. It functions in the pathway mycotoxin biosynthesis; patulin biosynthesis. Functionally, FAD-linked oxidoreductase; part of the gene cluster that mediates the biosynthesis of patulin, an acetate-derived tetraketide mycotoxin produced by several fungal species that shows antimicrobial properties against several bacteria. PatO acts with patJ in the vacuole to convert gentisyl alcohol to isoepoxydon. The pathway begins with the synthesis of 6-methylsalicylic acid by the polyketide synthase (PKS) patK via condensation of acetate and malonate units. The 6-methylsalicylic acid decarboxylase patG then catalyzes the decarboxylation of 6-methylsalicylic acid to yield m-cresol (also known as 3-methylphenol). These first reactions occur in the cytosol. The intermediate m-cresol is then transported into the endoplasmic reticulum where the cytochrome P450 monooxygenase patH converts it to m-hydroxybenzyl alcohol, which is further converted to gentisyl alcohol by the cytochrome P450 monooxygenase patI. The oxidoreductases patJ and patO further convert gentisyl alcohol to isoepoxydon in the vacuole. PatN catalyzes then the transformation of isoepoxydon into phyllostine. The cluster protein patF is responsible for the conversion from phyllostine to neopatulin whereas the alcohol dehydrogenase patD converts neopatulin to E-ascladiol. The steps between isoepoxydon and E-ascladiol occur in the cytosol, and E-ascladiol is probably secreted to the extracellular space by one of the cluster-specific transporters patC or patM. Finally, the secreted patulin synthase patE catalyzes the conversion of E-ascladiol to patulin. This is FAD-linked oxidoreductase patO from Penicillium expansum (Blue mold rot fungus).